We begin with the raw amino-acid sequence, 263 residues long: Proteasome subunit beta type-4 (263 aa).

Methionine 1 carries the post-translational modification N-acetylmethionine. Positions 1–44 (MEAFWESRTGHWAGGPAPGQFYRVPSTPSCLMDPMSAPARPITR) are excised as a propeptide. Serine 26 carries the post-translational modification Phosphoserine. Tyrosine 101 is subject to Phosphotyrosine.

The protein belongs to the peptidase T1B family. As to quaternary structure, the 26S proteasome consists of a 20S proteasome core and two 19S regulatory subunits. The 20S proteasome core is a barrel-shaped complex made of 28 subunits that are arranged in four stacked rings. The two outer rings are each formed by seven alpha subunits, and the two inner rings are formed by seven beta subunits. The proteolytic activity is exerted by three beta-subunits PSMB5, PSMB6 and PSMB7. Forms a ternary complex with SMAD1 and OAZ1 before PSMB4 is incorporated into the 20S proteasome. Interacts with PRPF19.

The protein resides in the cytoplasm. The protein localises to the nucleus. Non-catalytic component of the 20S core proteasome complex involved in the proteolytic degradation of most intracellular proteins. This complex plays numerous essential roles within the cell by associating with different regulatory particles. Associated with two 19S regulatory particles, forms the 26S proteasome and thus participates in the ATP-dependent degradation of ubiquitinated proteins. The 26S proteasome plays a key role in the maintenance of protein homeostasis by removing misfolded or damaged proteins that could impair cellular functions, and by removing proteins whose functions are no longer required. Associated with the PA200 or PA28, the 20S proteasome mediates ubiquitin-independent protein degradation. This type of proteolysis is required in several pathways including spermatogenesis (20S-PA200 complex) or generation of a subset of MHC class I-presented antigenic peptides (20S-PA28 complex). SMAD1/OAZ1/PSMB4 complex mediates the degradation of the CREBBP/EP300 repressor SNIP1. This is Proteasome subunit beta type-4 (Psmb4) from Rattus norvegicus (Rat).